A 395-amino-acid polypeptide reads, in one-letter code: Secreted aspartyl protease 1 (395 aa).

The first 20 residues, 1-20 (MQLSIQAIIGFVVAAGLAVA), serve as a signal peptide directing secretion. Positions 21-88 (SELPSPMTVN…HLLLDLIDKR (68 aa)) are cleaved as a propeptide — removed in mature form. Asn-41 carries an N-linked (GlcNAc...) asparagine glycan. Positions 105 to 391 (WAGDVQFGQS…DMGKNRMGFA (287 aa)) constitute a Peptidase A1 domain. Residues Asp-121 and Asp-283 contribute to the active site. Residues Cys-321 and Cys-352 are joined by a disulfide bond.

It belongs to the peptidase A1 family.

Its subcellular location is the secreted. Inhibited by pepstatin A. In terms of biological role, dominant secreted aspartyl protease that has a clear preference for aromatic residues in the P1' position directly adjacent to the cleavage site and, in particular, Trp. In addition, it generally cleaves peptides containing Lys, Arg, Phe, Tyr, or Nle (norleucine) in the P1 position, Nle and Glu at P2, and Arg and Val at P2'. Has important roles in facilitating the interaction of the yeast with the external environment. Is able to rapidly hydrolyze Staphylococcus aureus protein A, an important S.aureus virulence factor involved in immune evasion and biofilm formation. Shows anti-biofilm properties and thus plays a role in inter-kingdom interactions, beneficial for host skin health. The polypeptide is Secreted aspartyl protease 1 (Malassezia globosa (strain ATCC MYA-4612 / CBS 7966) (Dandruff-associated fungus)).